Here is a 422-residue protein sequence, read N- to C-terminus: F-box/kelch-repeat protein At3g27150 (422 aa).

The region spanning 68-114 is the F-box domain; the sequence is LLNVPQLVYELEVEILARVPRFEYWKLKLLNKGFSRLLKSDEIFKVR. Kelch repeat units follow at residues 162–212, 213–264, 266–312, 314–361, and 366–412; these read ESLC…TCGT, VVFV…YLRG, FYVL…SPPL, AVVG…VAFK, and KLLV…RFNH.

The protein is F-box/kelch-repeat protein At3g27150 of Arabidopsis thaliana (Mouse-ear cress).